Here is a 609-residue protein sequence, read N- to C-terminus: UvrABC system protein C (609 aa).

Residues His-13 to Val-91 enclose the GIY-YIG domain. Residues Gln-201–Val-236 form the UVR domain.

This sequence belongs to the UvrC family. Interacts with UvrB in an incision complex.

It localises to the cytoplasm. Its function is as follows. The UvrABC repair system catalyzes the recognition and processing of DNA lesions. UvrC both incises the 5' and 3' sides of the lesion. The N-terminal half is responsible for the 3' incision and the C-terminal half is responsible for the 5' incision. In Haemophilus influenzae (strain ATCC 51907 / DSM 11121 / KW20 / Rd), this protein is UvrABC system protein C.